The primary structure comprises 231 residues: Cytochrome b-c1 complex subunit Rieske, mitochondrial (231 aa).

A mitochondrion-targeting transit peptide spans 1-24; it reads MAPVSIVSRAAMRAAAAPARAVRA. The propeptide at 25–32 is removed in mature form; it reads LTTSTALQ. Topologically, residues 33–65 are mitochondrial matrix; sequence GSSSSTFESPFKGESKAAKVPDFGKYMSKAPPS. A helical transmembrane segment spans residues 66–95; the sequence is TNMLFSYFMVGTMGAITAAGAKSTIQEFLK. The Mitochondrial intermembrane segment spans residues 96–231; sequence NMSASADVLA…FPEEGKLVIG (136 aa). Positions 134-229 constitute a Rieske domain; the sequence is RHRTPAEIEE…YEFPEEGKLV (96 aa). 4 residues coordinate [2Fe-2S] cluster: C174, H176, C193, and H196. An intrachain disulfide couples C179 to C195.

The protein belongs to the Rieske iron-sulfur protein family. As to quaternary structure, component of the ubiquinol-cytochrome c oxidoreductase (cytochrome b-c1 complex, complex III, CIII), a multisubunit enzyme composed of 10 subunits. The complex is composed of 3 respiratory subunits cytochrome b (cob), cytochrome c1 (cyt-1) and Rieske protein (fes-1), 2 core protein subunits pep and ucr-1, and 5 low-molecular weight protein subunits qcr6, qcr7, qcr8, qcr9 and probably NCU16844/qcr10. The complex exists as an obligatory dimer and forms supercomplexes (SCs) in the inner mitochondrial membrane with NADH-ubiquinone oxidoreductase (complex I, CI) and cytochrome c oxidase (complex IV, CIV), resulting in different assemblies (supercomplexes SCI(1)III(2), SCIII(2)IV(1) and SCIII(2)IV(2) as well as higher order I(x)III(y)IV(z) megacomplexes). It depends on [2Fe-2S] cluster as a cofactor. Processed by both the mitochondrial processing peptidase (MPP) and the mitochondrial intermediate protease (MIP). Initially, MPP removes 25 amino acids from the newly imported precursor in the mitochondrial matrix. This proteolytic processing is then followed by a second proteolytic cleavage by MIP, which removes an octapeptide to generate mature-sized Rieske protein.

The protein resides in the mitochondrion inner membrane. The catalysed reaction is a quinol + 2 Fe(III)-[cytochrome c](out) = a quinone + 2 Fe(II)-[cytochrome c](out) + 2 H(+)(out). In terms of biological role, component of the ubiquinol-cytochrome c oxidoreductase, a multisubunit transmembrane complex that is part of the mitochondrial electron transport chain which drives oxidative phosphorylation. The respiratory chain contains 3 multisubunit complexes succinate dehydrogenase (complex II, CII), ubiquinol-cytochrome c oxidoreductase (cytochrome b-c1 complex, complex III, CIII) and cytochrome c oxidase (complex IV, CIV), that cooperate to transfer electrons derived from NADH and succinate to molecular oxygen, creating an electrochemical gradient over the inner membrane that drives transmembrane transport and the ATP synthase. The cytochrome b-c1 complex catalyzes electron transfer from ubiquinol to cytochrome c, linking this redox reaction to translocation of protons across the mitochondrial inner membrane, with protons being carried across the membrane as hydrogens on the quinol. In the process called Q cycle, 2 protons are consumed from the matrix, 4 protons are released into the intermembrane space and 2 electrons are passed to cytochrome c. The Rieske protein is a catalytic core subunit containing a [2Fe-2S] iron-sulfur cluster. It cycles between 2 conformational states during catalysis to transfer electrons from the quinol bound in the Q(0) site in cytochrome b to cytochrome c1. In Neurospora crassa (strain ATCC 24698 / 74-OR23-1A / CBS 708.71 / DSM 1257 / FGSC 987), this protein is Cytochrome b-c1 complex subunit Rieske, mitochondrial (fes-1).